The sequence spans 852 residues: MNGHFAAIGNGPTAKQYDHGIQVIDEDKSFNTNLNDYLTETHVAESGFNYHLISVFGSQSTGKSTLLNHLFGTQFSVMSETERRQTTKGIWLSKNKRDSANGSPMADNILVMDVEGTDGRERGEDQDFERKSALFALATSEVLIVNIWEHQVGLYQGANMGLLKTVFEVNLQLFLKDRQSQTRSLLFFVIRDFVGNTPLENLRTTLITDLSKIWSSISKPQGLEDSKIEDYFDFAFSALPHKIYQPEKFLAEVDRLGARFTTGHRSTKDQEFGGGVFLPEYHRRIPADGLSVYAGGVWDQIVNNKDLDLPTQQELLAQFRCDEIAREVLVGFDTVIAPLEEQQVEAIRLGKPAAVLADLGAQGAGAREKCIKAFETQASRYHKGVYTMKRGELESKIDTRLKALYQAQLTAAHKAGVAAFSEAVSGAVKAGQKAGGSYEFAEIVAKQKAKTLQIFKTEAKSLSIPGVAWSNFKPQYKLFEKELDEVSARLRKEEMRRLAIRVERWVRSRLGDAIGLEFNKLGSGRGGSVSPEGGEKPATEKDLWDRVWNAFIGIVKEAETRFAERAKSFEASPEEVEVGLWRLRRKSWVALREKIEEEVMESNILMKLRENFEDKFRYDEDGVPRIWRPTDDIEGIYTKARESTLGLVPLLSRFRLSETYAPPDLPAFIGVQPAGVEPEDEEDLLPIGGIDEEEGKSLEEETTVLGESKRQDLVVRFKKMADGVYVEAKRSAIGGITQVPLYFYVILLILGWNEILMVLRNPFLILLILVMGGGTYIAYSLNLLGPMMQMSNAAFNQAVDIGKDRLRDFLVNNETARQALAVPARQMGADISLDRLDSRGKKAQDISDDDDI.

Topologically, residues 1–738 (MNGHFAAIGN…KRSAIGGITQ (738 aa)) are cytoplasmic. The region spanning 47–294 (GFNYHLISVF…IPADGLSVYA (248 aa)) is the GB1/RHD3-type G domain. 57 to 64 (GSQSTGKS) is a binding site for GTP. Residues 475-500 (QYKLFEKELDEVSARLRKEEMRRLAI) are a coiled coil. The helical transmembrane segment at 739-759 (VPLYFYVILLILGWNEILMVL) threads the bilayer. The Lumenal portion of the chain corresponds to 760–762 (RNP). A helical transmembrane segment spans residues 763 to 783 (FLILLILVMGGGTYIAYSLNL). The Cytoplasmic portion of the chain corresponds to 784 to 852 (LGPMMQMSNA…AQDISDDDDI (69 aa)).

This sequence belongs to the TRAFAC class dynamin-like GTPase superfamily. GB1/RHD3 GTPase family. RHD3 subfamily.

It is found in the endoplasmic reticulum membrane. In terms of biological role, cooperates with the reticulon proteins and tubule-shaping DP1 family proteins to generate and maintain the structure of the tubular endoplasmic reticulum network. Has GTPase activity, which is required for its function in ER organization. This is Protein SEY1 from Podospora anserina (strain S / ATCC MYA-4624 / DSM 980 / FGSC 10383) (Pleurage anserina).